The chain runs to 681 residues: Peroxisomal acyl-coenzyme A oxidase 2 (681 aa).

S3 and S9 each carry phosphoserine. T13 is modified (phosphothreonine). K66, K137, K453, and K561 each carry N6-succinyllysine. The Microbody targeting signal signature appears at 679-681; it reads SKL.

Belongs to the acyl-CoA oxidase family. In terms of assembly, homodimer. The cofactor is FAD. Present in all tissues tested: heart, brain, placenta, lung, liver, skeletal muscle, kidney and pancreas. Most abundant in heart, liver and kidney.

It is found in the peroxisome. The enzyme catalyses (25R)-3alpha,7alpha,12alpha-trihydroxy-5beta-cholestan-26-oyl-CoA + A + H2O = (24R,25R)-3alpha,7alpha,12alpha,24-tetrahydroxy-5beta-cholestan-26-oyl-CoA + AH2. The catalysed reaction is (25S)-3alpha,7alpha,12alpha-trihydroxy-5beta-cholestan-26-oyl-CoA + O2 = (24E)-3alpha,7alpha,12alpha-trihydroxy-5beta-cholest-24-en-26-oyl-CoA + H2O2. Oxidizes the CoA esters of the bile acid intermediates di- and tri-hydroxycholestanoic acids. Capable of oxidizing short as well as long chain 2-methyl branched fatty acids. The polypeptide is Peroxisomal acyl-coenzyme A oxidase 2 (Homo sapiens (Human)).